The sequence spans 437 residues: ATP-dependent protease ATPase subunit HslU (437 aa).

ATP contacts are provided by residues valine 18, glycine 60–glutamate 65, aspartate 250, glutamate 315, and arginine 387.

It belongs to the ClpX chaperone family. HslU subfamily. As to quaternary structure, a double ring-shaped homohexamer of HslV is capped on each side by a ring-shaped HslU homohexamer. The assembly of the HslU/HslV complex is dependent on binding of ATP.

It localises to the cytoplasm. ATPase subunit of a proteasome-like degradation complex; this subunit has chaperone activity. The binding of ATP and its subsequent hydrolysis by HslU are essential for unfolding of protein substrates subsequently hydrolyzed by HslV. HslU recognizes the N-terminal part of its protein substrates and unfolds these before they are guided to HslV for hydrolysis. The polypeptide is ATP-dependent protease ATPase subunit HslU (Methylobacterium nodulans (strain LMG 21967 / CNCM I-2342 / ORS 2060)).